Reading from the N-terminus, the 245-residue chain is tRNA1(Val) (adenine(37)-N6)-methyltransferase (245 aa).

The protein belongs to the methyltransferase superfamily. tRNA (adenine-N(6)-)-methyltransferase family.

It localises to the cytoplasm. It carries out the reaction adenosine(37) in tRNA1(Val) + S-adenosyl-L-methionine = N(6)-methyladenosine(37) in tRNA1(Val) + S-adenosyl-L-homocysteine + H(+). Its function is as follows. Specifically methylates the adenine in position 37 of tRNA(1)(Val) (anticodon cmo5UAC). In Erwinia tasmaniensis (strain DSM 17950 / CFBP 7177 / CIP 109463 / NCPPB 4357 / Et1/99), this protein is tRNA1(Val) (adenine(37)-N6)-methyltransferase.